A 317-amino-acid polypeptide reads, in one-letter code: HTH-type transcriptional regulator CfxR (317 aa).

Residues 8–65 enclose the HTH lysR-type domain; it reads LTLRQLQIFVTVARHASFVRAAEELHLTQPAVSMQVKQLESVVGMALFERVKGQLTLT. A DNA-binding region (H-T-H motif) is located at residues 25-44; sequence FVRAAEELHLTQPAVSMQVK.

This sequence belongs to the LysR transcriptional regulatory family.

Its function is as follows. Trans-acting transcriptional regulator of RuBisCO genes (cfxLS) expression. This chain is HTH-type transcriptional regulator CfxR (cfxR), found in Cupriavidus necator (strain ATCC 17699 / DSM 428 / KCTC 22496 / NCIMB 10442 / H16 / Stanier 337) (Ralstonia eutropha).